Here is a 495-residue protein sequence, read N- to C-terminus: Ankyrin repeat domain-containing protein 34A (495 aa).

ANK repeat units follow at residues 4–33 (TEGH…YVNE), 37–72 (QGET…DPNI), 76–106 (LGRT…DPSV), and 110–139 (AGAS…AKGT). At Gln-15 the chain carries N5-methylglutamine. Composition is skewed to polar residues over residues 147–162 (DTSP…YLNS) and 180–191 (VCTSPSEVQLQT). The interval 147–495 (DTSPSGTKKT…SLGGPGEPGR (349 aa)) is disordered. Positions 203–213 (AQEEEEKRDVF) are enriched in basic and acidic residues. The span at 223-232 (DPSPSEPLPK) shows a compositional bias: pro residues. Basic residues predominate over residues 233 to 242 (PPRHPPKPLK). The residue at position 315 (Thr-315) is a Phosphothreonine. Residues 375–385 (SVSSPRQSQES) show a composition bias toward polar residues. Over residues 462–472 (RTKRKLVRRHS) the composition is skewed to basic residues. Over residues 485-495 (QSLGGPGEPGR) the composition is skewed to gly residues.

It belongs to the ANKRD34 family. Methylated at Gln-15 by N6AMT1.

The protein is Ankyrin repeat domain-containing protein 34A (Ankrd34a) of Rattus norvegicus (Rat).